The following is a 479-amino-acid chain: UDP-N-acetylmuramate--L-alanine ligase (479 aa).

An ATP-binding site is contributed by 126–132 (GTHGKTT).

This sequence belongs to the MurCDEF family.

Its subcellular location is the cytoplasm. It catalyses the reaction UDP-N-acetyl-alpha-D-muramate + L-alanine + ATP = UDP-N-acetyl-alpha-D-muramoyl-L-alanine + ADP + phosphate + H(+). The protein operates within cell wall biogenesis; peptidoglycan biosynthesis. Its function is as follows. Cell wall formation. In Alkalilimnicola ehrlichii (strain ATCC BAA-1101 / DSM 17681 / MLHE-1), this protein is UDP-N-acetylmuramate--L-alanine ligase.